The sequence spans 185 residues: Inner membrane-spanning protein YciB (185 aa).

A run of 5 helical transmembrane segments spans residues L19–I39, I53–Y73, W76–F96, T118–S138, and F149–I169.

This sequence belongs to the YciB family.

The protein resides in the cell inner membrane. Plays a role in cell envelope biogenesis, maintenance of cell envelope integrity and membrane homeostasis. This Haemophilus influenzae (strain PittEE) protein is Inner membrane-spanning protein YciB.